A 188-amino-acid polypeptide reads, in one-letter code: Elongation factor P (188 aa).

It belongs to the elongation factor P family.

The protein resides in the cytoplasm. Its pathway is protein biosynthesis; polypeptide chain elongation. Functionally, involved in peptide bond synthesis. Stimulates efficient translation and peptide-bond synthesis on native or reconstituted 70S ribosomes in vitro. Probably functions indirectly by altering the affinity of the ribosome for aminoacyl-tRNA, thus increasing their reactivity as acceptors for peptidyl transferase. This chain is Elongation factor P, found in Rickettsia typhi (strain ATCC VR-144 / Wilmington).